Consider the following 118-residue polypeptide: Fluoride-specific ion channel FluC 2 (118 aa).

4 helical membrane-spanning segments follow: residues 1–21 (MIEALLVATGGFFGAITRFAI), 33–53 (FPLATFLINITGAFLLGYIIG), 55–75 (GVTTGWQLLLGTGFMGAFTTF), and 91–111 (ISTFLLYLSATYIIGILFAFL). Na(+)-binding residues include glycine 70 and threonine 73.

Belongs to the fluoride channel Fluc/FEX (TC 1.A.43) family.

It localises to the cell membrane. It carries out the reaction fluoride(in) = fluoride(out). Its activity is regulated as follows. Na(+) is not transported, but it plays an essential structural role and its presence is essential for fluoride channel function. Its function is as follows. Fluoride-specific ion channel. Important for reducing fluoride concentration in the cell, thus reducing its toxicity. In Bacillus cereus (strain ATCC 14579 / DSM 31 / CCUG 7414 / JCM 2152 / NBRC 15305 / NCIMB 9373 / NCTC 2599 / NRRL B-3711), this protein is Fluoride-specific ion channel FluC 2.